The chain runs to 2760 residues: A-kinase anchor protein 13 (2760 aa).

8 disordered regions span residues 356–388, 442–517, 530–577, 604–711, 729–857, 890–940, 954–1029, and 1132–1162; these read CSHK…QDSC, PDAR…EPKQ, AAGA…VLPA, SSLD…AAHN, EKDL…EQEG, GGSI…QEIS, EKAL…ASEA, and EGTD…DLPT. A compositionally biased stretch (polar residues) spans 378-388; it reads DSRSASHQDSC. The segment covering 442-454 has biased composition (basic and acidic residues); that stretch reads PDARQHSSGRELP. An important for interaction with PRKAR2A region spans residues 482–504; it reads QNSKPQVGESAKERLENSDISSA. Positions 530–547 are enriched in low complexity; sequence AAGADAPAEASPAWSPEE. Polar residues-rich tracts occupy residues 620-638, 654-664, and 701-711; these read KQNS…SQAP, CPQSTETSSGG, and DTVTSDTAAHN. Low complexity predominate over residues 769-780; sequence SSFSLASSPESE. S776 is subject to Phosphoserine. A Phosphothreonine modification is found at T801. Over residues 814–826 the composition is skewed to basic and acidic residues; it reads PDGRDLNDTDKVG. Residues 839–849 show a composition bias toward polar residues; it reads ELQTSMGNTSP. A compositionally biased stretch (basic and acidic residues) spans 906–931; sequence GKDKATKCPSVKEDVHSSEMSREDQR. T932 carries the phosphothreonine modification. 2 stretches are compositionally biased toward polar residues: residues 958 to 972 and 1001 to 1020; these read QHSN…CLQT and TSLS…SGSS. S962 carries the phosphoserine modification. The important for interaction with PRKAR2A stretch occupies residues 1213–1228; it reads SIEETATRIVEAVIKQ. Disordered regions lie at residues 1392–1411, 1425–1508, and 1520–1539; these read GVLQ…PSDE, LLCD…VPAN, and SPFR…DAEM. Positions 1428–1439 are enriched in low complexity; sequence DTTGSSSSTDDT. Residues 1449–1472 are compositionally biased toward polar residues; it reads GSDVSLPQTSKLNRSRNHQSSNGF. Residues S1450, S1468, S1501, S1526, and S1585 each carry the phosphoserine modification. An important for interaction with MAP2K3 region spans residues 1546-1695; the sequence is QVLGHVVRRP…SRPFHSASAN (150 aa). The interval 1592 to 1628 is disordered; it reads GGGVGNKPSSSLEISSANSSELRNPFSGEEQRSSLMS. The span at 1600-1611 shows a compositional bias: low complexity; the sequence is SSSLEISSANSS. Phosphoserine occurs at positions 1625, 1628, and 1630. An N6-methyllysine modification is found at K1654. The interval 1733–1755 is disordered; the sequence is RNKMSSSKKSKKEKDKKTLNGHT. A Phorbol-ester/DAG-type zinc finger spans residues 1753–1800; that stretch reads GHTFSPIPIVGPINCSQCMKPFTNKDAYTCASCGAFVHKGCRENLASC. 3 positions are modified to phosphoserine: S1838, S1857, and S1891. The interval 1881 to 2760 is interaction with ESR1; it reads MSNTWKFLSH…VPAEGEEIFC (880 aa). T1892 is modified (phosphothreonine). 2 positions are modified to phosphoserine: S1894 and S1907. Positions 1956-2153 constitute a DH domain; sequence KRQEVIYELM…KDVIGAVDSK (198 aa). One can recognise a PH domain in the interval 2176 to 2280; sequence MRMKSGQMFA…WIQIIQDTIN (105 aa). 2 positions are modified to phosphoserine: S2292 and S2345. A coiled-coil region spans residues 2292–2329; sequence SENEEEKRLLDTKARELKEQLQQKDQQILLLLEEKEMI. T2415 carries the phosphothreonine modification. Residues 2422–2450 form a disordered region; the sequence is HQLNASKGGEKEEGDDGQDLRRTESDSGL. Residues 2439–2450 show a composition bias toward basic and acidic residues; sequence QDLRRTESDSGL. Phosphoserine occurs at positions 2511 and 2514. A coiled-coil region spans residues 2516 to 2632; that stretch reads LIEQEKQRSL…LSQRQMEQDL (117 aa). Disordered regions lie at residues 2568–2588 and 2660–2760; these read AERE…REEL and TPSI…EIFC. 2 stretches are compositionally biased toward polar residues: residues 2660–2684 and 2696–2711; these read TPSI…SISR and SSAS…SQAP. S2676 bears the Phosphoserine mark. Positions 2743–2752 are enriched in low complexity; the sequence is PGDGPAPEVP.

Interacts with the cAMP-dependent protein kinase (PKA) holoenzyme and with the regulatory subunit PRKAR2A. Interacts with RHOA. Also interacts with RHOB and RHOC. Identified in a ternary complex with RHOA and PRKAR2A. Identified in a complex with NR3C1 and RHOA. Interacts with BRAF and KSR1. Identified in a complex with BRAF and KSR1. Component of a signaling complex containing at least AKAP13, PKN1, MAPK14, ZAK and MAP2K3. Within this complex, AKAP13 interacts directly with PKN1, which in turn recruits MAPK14, MAP2K3 and ZAK. Interacts (phosphorylated form) with YWHAB and YWHAZ. Interaction with YWHAB inhibits activation of RHOA, interferes with PKN1 binding and activation of MAP kinases. Interacts with GNA12. Interacts with IKBKB. Interacts with ESR1, THRA, PPARA and NME2. Interacts (via the C-terminal domain after the PH domain) with MEF2C and RXRB. Interacts (via the C-terminal domain after the PH domain) with PRKD1. Detected in bone osteoblasts (at protein level).

It localises to the cytoplasm. The protein localises to the cytosol. Its subcellular location is the cell cortex. It is found in the nucleus. The protein resides in the membrane. Functionally, scaffold protein that plays an important role in assembling signaling complexes downstream of several types of G protein-coupled receptors. Activates RHOA in response to signaling via G protein-coupled receptors via its function as Rho guanine nucleotide exchange factor. May also activate other Rho family members. Part of a kinase signaling complex that links ADRA1A and ADRA1B adrenergic receptor signaling to the activation of downstream p38 MAP kinases, such as MAPK11 and MAPK14. Part of a signaling complex that links ADRA1B signaling to the activation of RHOA and IKBKB/IKKB, leading to increased NF-kappa-B transcriptional activity. Part of a RHOA-dependent signaling cascade that mediates responses to lysophosphatidic acid (LPA), a signaling molecule that activates G-protein coupled receptors and potentiates transcriptional activation of the glucocorticoid receptor NR3C1. Part of a signaling cascade that stimulates MEF2C-dependent gene expression in response to lysophosphatidic acid (LPA). Part of a signaling pathway that activates MAPK11 and/or MAPK14 and leads to increased transcription activation of the estrogen receptors ESR1 and ESR2. Part of a signaling cascade that links cAMP and EGFR signaling to BRAF signaling and to PKA-mediated phosphorylation of KSR1, leading to the activation of downstream MAP kinases, such as MAPK1 or MAPK3. Functions as a scaffold protein that anchors cAMP-dependent protein kinase (PKA) and PRKD1. This promotes activation of PRKD1, leading to increased phosphorylation of HDAC5 and ultimately cardiomyocyte hypertrophy. Has no guanine nucleotide exchange activity on CDC42, Ras or Rac. Required for normal embryonic heart development, and in particular for normal sarcomere formation in the developing cardiomyocytes. Plays a role in cardiomyocyte growth and cardiac hypertrophy in response to activation of the beta-adrenergic receptor by phenylephrine or isoproterenol. Required for normal adaptive cardiac hypertrophy in response to pressure overload. Plays a role in osteogenesis. The sequence is that of A-kinase anchor protein 13 from Rattus norvegicus (Rat).